We begin with the raw amino-acid sequence, 450 residues long: UDP-N-acetylmuramoylalanine--D-glutamate ligase (450 aa).

119-125 is an ATP binding site; sequence GSNGKTT.

This sequence belongs to the MurCDEF family.

Its subcellular location is the cytoplasm. The enzyme catalyses UDP-N-acetyl-alpha-D-muramoyl-L-alanine + D-glutamate + ATP = UDP-N-acetyl-alpha-D-muramoyl-L-alanyl-D-glutamate + ADP + phosphate + H(+). It functions in the pathway cell wall biogenesis; peptidoglycan biosynthesis. In terms of biological role, cell wall formation. Catalyzes the addition of glutamate to the nucleotide precursor UDP-N-acetylmuramoyl-L-alanine (UMA). This chain is UDP-N-acetylmuramoylalanine--D-glutamate ligase, found in Streptococcus thermophilus (strain CNRZ 1066).